Consider the following 251-residue polypeptide: HTH-type transcriptional regulator UlaR (251 aa).

Positions 3–58 constitute an HTH deoR-type domain; sequence EAQRHQILLEMLAQLGFVTVEKVVERLGISPATARRDINKLDESGKLKKVRNGAEA. A DNA-binding region (H-T-H motif) is located at residues 20 to 39; it reads VTVEKVVERLGISPATARRD.

Its subcellular location is the cytoplasm. Its function is as follows. Represses ulaG and the ulaABCDEF operon. This Escherichia coli O127:H6 (strain E2348/69 / EPEC) protein is HTH-type transcriptional regulator UlaR.